The primary structure comprises 173 residues: Crossover junction endodeoxyribonuclease RuvC (173 aa).

Active-site residues include Asp-8, Glu-67, and Asp-139. Mg(2+)-binding residues include Asp-8, Glu-67, and Asp-139.

It belongs to the RuvC family. Homodimer which binds Holliday junction (HJ) DNA. The HJ becomes 2-fold symmetrical on binding to RuvC with unstacked arms; it has a different conformation from HJ DNA in complex with RuvA. In the full resolvosome a probable DNA-RuvA(4)-RuvB(12)-RuvC(2) complex forms which resolves the HJ. Mg(2+) serves as cofactor.

Its subcellular location is the cytoplasm. The catalysed reaction is Endonucleolytic cleavage at a junction such as a reciprocal single-stranded crossover between two homologous DNA duplexes (Holliday junction).. Its function is as follows. The RuvA-RuvB-RuvC complex processes Holliday junction (HJ) DNA during genetic recombination and DNA repair. Endonuclease that resolves HJ intermediates. Cleaves cruciform DNA by making single-stranded nicks across the HJ at symmetrical positions within the homologous arms, yielding a 5'-phosphate and a 3'-hydroxyl group; requires a central core of homology in the junction. The consensus cleavage sequence is 5'-(A/T)TT(C/G)-3'. Cleavage occurs on the 3'-side of the TT dinucleotide at the point of strand exchange. HJ branch migration catalyzed by RuvA-RuvB allows RuvC to scan DNA until it finds its consensus sequence, where it cleaves and resolves the cruciform DNA. This chain is Crossover junction endodeoxyribonuclease RuvC, found in Vibrio vulnificus (strain CMCP6).